We begin with the raw amino-acid sequence, 303 residues long: Protoheme IX farnesyltransferase (303 aa).

The next 7 membrane-spanning stretches (helical) occupy residues 25 to 45 (MGLV…AIVL), 54 to 74 (IPQI…ACAL), 118 to 138 (LLFA…VGYV), 151 to 171 (WNTV…WTAI), 177 to 197 (LVAV…FYAL), 230 to 250 (LVVL…FIVL), and 280 to 300 (FIYS…ISLI).

This sequence belongs to the UbiA prenyltransferase family. Protoheme IX farnesyltransferase subfamily. In terms of assembly, interacts with CtaA.

The protein localises to the cell membrane. It catalyses the reaction heme b + (2E,6E)-farnesyl diphosphate + H2O = Fe(II)-heme o + diphosphate. The protein operates within porphyrin-containing compound metabolism; heme O biosynthesis; heme O from protoheme: step 1/1. Its function is as follows. Converts heme B (protoheme IX) to heme O by substitution of the vinyl group on carbon 2 of heme B porphyrin ring with a hydroxyethyl farnesyl side group. In Staphylococcus saprophyticus subsp. saprophyticus (strain ATCC 15305 / DSM 20229 / NCIMB 8711 / NCTC 7292 / S-41), this protein is Protoheme IX farnesyltransferase.